The following is a 473-amino-acid chain: Suppressor of SWI4 1 homolog (473 aa).

The region spanning 29–292 is the Brix domain; it reads PHSFVFTRGC…LIKVQEGVGE (264 aa). Phosphoserine occurs at positions 238 and 240. Residues 323–473 form a disordered region; the sequence is AQRQAQQAQN…GRGRPRKRVA (151 aa). Residues 324 to 334 are compositionally biased toward low complexity; it reads QRQAQQAQNVQ. The span at 335–360 shows a compositional bias: basic and acidic residues; the sequence is RKQEQREAHRKKSLEGMKKARVRGGD. A compositionally biased stretch (acidic residues) spans 376-388; the sequence is GEDDDEQEDDDIE. The span at 407–421 shows a compositional bias: basic residues; that stretch reads KRKRLAKSPGQKRKR. A compositionally biased stretch (basic and acidic residues) spans 422–444; sequence REMDRGRGRLCDQKFPKPKDKSH. N6-acetyllysine is present on Lys438. Basic residues predominate over residues 464 to 473; that stretch reads GRGRPRKRVA.

Its subcellular location is the nucleus. The protein localises to the nucleolus. In terms of biological role, may have a role in cell growth. The polypeptide is Suppressor of SWI4 1 homolog (PPAN) (Pongo abelii (Sumatran orangutan)).